Consider the following 314-residue polypeptide: Ribosomal RNA small subunit methyltransferase H (314 aa).

Residues Gly37 to His39, Asp57, Phe83, Asp105, and Gln112 each bind S-adenosyl-L-methionine.

The protein belongs to the methyltransferase superfamily. RsmH family.

The protein resides in the cytoplasm. It carries out the reaction cytidine(1402) in 16S rRNA + S-adenosyl-L-methionine = N(4)-methylcytidine(1402) in 16S rRNA + S-adenosyl-L-homocysteine + H(+). Its function is as follows. Specifically methylates the N4 position of cytidine in position 1402 (C1402) of 16S rRNA. The polypeptide is Ribosomal RNA small subunit methyltransferase H (Thioalkalivibrio sulfidiphilus (strain HL-EbGR7)).